The following is a 378-amino-acid chain: MSDTMQLDSIWHNGKQYRKGYTTGSCATAAAKVAALMVLRQQVIDHVSIVTPSGVTLRLNVEQPLIEGQQATAAIRKDGGDDVDATHGMLIFARVTLCDHGEIHLRGGEGVGTVTRKGVGLPVGSSAINRTPRQTIEAAVREAIGPLRGAEVEIFAPEGEERAKKTYNGRLGILGGISIIGTTGIVTPMSEESWKRSLAIELEMKRSAGAEKVILVPGNHGERFVREQLGLDGQLVVTMSNFVGYMLQEAVRLGFRHIMLVGHPGKLVKVAAGIFHTHSHIADGRMETLIAYLALMGASQELLLEVSHCDTTEAAMELIAEHGLQAVYDRIAERICERMSEMLRFAVNPPRCDAIMFSFDNQILGTSRPLNDILEAMR.

It belongs to the CbiD family.

The enzyme catalyses Co-precorrin-5B + S-adenosyl-L-methionine = Co-precorrin-6A + S-adenosyl-L-homocysteine. It participates in cofactor biosynthesis; adenosylcobalamin biosynthesis; cob(II)yrinate a,c-diamide from sirohydrochlorin (anaerobic route): step 6/10. Catalyzes the methylation of C-1 in cobalt-precorrin-5B to form cobalt-precorrin-6A. This Photorhabdus laumondii subsp. laumondii (strain DSM 15139 / CIP 105565 / TT01) (Photorhabdus luminescens subsp. laumondii) protein is Cobalt-precorrin-5B C(1)-methyltransferase.